Reading from the N-terminus, the 362-residue chain is 3-dehydroquinate synthase (362 aa).

Residues 71–76, 105–109, 129–130, K142, and K151 contribute to the NAD(+) site; these read DGEKYK, GVIGD, and TT. Residues E184, H248, and H265 each contribute to the Zn(2+) site.

It belongs to the sugar phosphate cyclases superfamily. Dehydroquinate synthase family. Co(2+) serves as cofactor. It depends on Zn(2+) as a cofactor. Requires NAD(+) as cofactor.

The protein localises to the cytoplasm. The enzyme catalyses 7-phospho-2-dehydro-3-deoxy-D-arabino-heptonate = 3-dehydroquinate + phosphate. It functions in the pathway metabolic intermediate biosynthesis; chorismate biosynthesis; chorismate from D-erythrose 4-phosphate and phosphoenolpyruvate: step 2/7. Catalyzes the conversion of 3-deoxy-D-arabino-heptulosonate 7-phosphate (DAHP) to dehydroquinate (DHQ). In Hamiltonella defensa subsp. Acyrthosiphon pisum (strain 5AT), this protein is 3-dehydroquinate synthase.